Reading from the N-terminus, the 334-residue chain is Formamidase (334 aa).

Positions 14 to 260 constitute a CN hydrolase domain; that stretch reads MLMGLVQYPV…WEIVTAEVFP (247 aa). Glu60 acts as the Proton acceptor in catalysis. Catalysis depends on Lys133, which acts as the Proton donor. Cys166 serves as the catalytic Nucleophile.

This sequence belongs to the carbon-nitrogen hydrolase superfamily. Aliphatic amidase family.

It catalyses the reaction formamide + H2O = formate + NH4(+). In terms of biological role, is an aliphatic amidase with a restricted substrate specificity, as it only hydrolyzes formamide. The sequence is that of Formamidase from Nitratidesulfovibrio vulgaris (strain DP4) (Desulfovibrio vulgaris).